The chain runs to 1489 residues: ABC transporter FUM19 (1489 aa).

10 consecutive transmembrane segments (helical) span residues 33-53 (IIFF…RIFV), 84-104 (CFSS…ALSY), 116-136 (LLSI…RTLW), 143-163 (LEYG…FAVW), 264-284 (LLLP…QAFL), 302-322 (WGLI…TSLY), 373-393 (FLNL…AWFL), 397-417 (VGIA…GVSI), 482-502 (IASL…MLAA), and 511-531 (HKVY…GSIF). The ABC transmembrane type-1 1 domain occupies 272–539 (IALIGLSLAQ…IFRSVSPLMS (268 aa)). An ABC transporter 1 domain is found at 591–823 (VKVIQASFGW…YQSHLQSLCI (233 aa)). 2 N-linked (GlcNAc...) asparagine glycosylation sites follow: Asn-612 and Asn-616. 625–632 (GPVGSGKS) lines the ATP pocket. An N-linked (GlcNAc...) asparagine glycan is attached at Asn-670. The segment covering 852–862 (EQTRSSRRGAD) has biased composition (basic and acidic residues). Residues 852-874 (EQTRSSRRGADNQETIASGADSS) form a disordered region. Positions 863 to 874 (NQETIASGADSS) are enriched in polar residues. The next 6 membrane-spanning stretches (helical) occupy residues 890-910 (AVPP…GFLY), 945-965 (ILAL…FALI), 977-999 (AITR…NYFS), 1031-1051 (AASS…LYFV), 1120-1140 (WLLF…VALV), and 1149-1169 (GFAG…TNVV). The 286-residue stretch at 902–1187 (SSLSYGFLYS…SMGAVSRLKA (286 aa)) folds into the ABC transmembrane type-1 2 domain. The ABC transporter 2 domain occupies 1214–1485 (IKIDGVSASY…KEGKFRALWE (272 aa)). 1254–1261 (GRTGSGKS) is a binding site for ATP.

This sequence belongs to the ABC transporter superfamily. ABCC family. Conjugate transporter (TC 3.A.1.208) subfamily.

The protein resides in the cell membrane. In terms of biological role, ABC transporter that may provide the dual role of fumonisin export and self-protection by allowing the fungus to evade the harmful effect of its own fumonisin production. Plays a role in the repression of the gene cluster that mediates fumonisin biosynthesis. This Gibberella moniliformis (strain M3125 / FGSC 7600) (Maize ear and stalk rot fungus) protein is ABC transporter FUM19.